The chain runs to 509 residues: Subtelomeric hrmA-associated cluster protein AFUA_5G14880 (509 aa).

Functionally, part of the subtelomeric hrmA-associated cluster (HAC) containing genes that alter the hyphal surface (such as reduced total chitin or increased beta-glucan exposure) and perturb inter-hyphal interactions within the developing biofilms, resulting in a loss of vertically aligned polarized growing filaments. Consequently, this hypoxia-typic morphotype (called H-MORPH) with altered biofilm architecture leads to increased hypoxia fitness, increased host inflammation, rapid disease progression, and mortality in a murine model of invasive aspergillosis. This is Subtelomeric hrmA-associated cluster protein AFUA_5G14880 from Aspergillus fumigatus (strain ATCC MYA-4609 / CBS 101355 / FGSC A1100 / Af293) (Neosartorya fumigata).